We begin with the raw amino-acid sequence, 436 residues long: ATP-dependent protease ATPase subunit HslU (436 aa).

ATP-binding positions include Ile-18, Gly-60–Glu-65, Asp-249, Glu-314, and Arg-386.

Belongs to the ClpX chaperone family. HslU subfamily. A double ring-shaped homohexamer of HslV is capped on each side by a ring-shaped HslU homohexamer. The assembly of the HslU/HslV complex is dependent on binding of ATP.

The protein resides in the cytoplasm. Functionally, ATPase subunit of a proteasome-like degradation complex; this subunit has chaperone activity. The binding of ATP and its subsequent hydrolysis by HslU are essential for unfolding of protein substrates subsequently hydrolyzed by HslV. HslU recognizes the N-terminal part of its protein substrates and unfolds these before they are guided to HslV for hydrolysis. In Chelativorans sp. (strain BNC1), this protein is ATP-dependent protease ATPase subunit HslU.